The primary structure comprises 233 residues: Ycf53-like protein (233 aa).

Belongs to the ycf53 family.

This Synechocystis sp. (strain ATCC 27184 / PCC 6803 / Kazusa) protein is Ycf53-like protein.